The primary structure comprises 319 residues: Glutathione synthetase (319 aa).

Positions 125 to 311 (KLFTAWFPEL…ITGMLMDAIE (187 aa)) constitute an ATP-grasp domain. Residue 151–207 (HQEHGDIILKPLDGMGGTSIFRVKQDDPNLSVIIETLTELSSRFCMAQNFLPAIKEG) coordinates ATP. Mg(2+)-binding residues include E281 and N283.

Belongs to the prokaryotic GSH synthase family. Requires Mg(2+) as cofactor. Mn(2+) serves as cofactor.

It catalyses the reaction gamma-L-glutamyl-L-cysteine + glycine + ATP = glutathione + ADP + phosphate + H(+). It participates in sulfur metabolism; glutathione biosynthesis; glutathione from L-cysteine and L-glutamate: step 2/2. The protein is Glutathione synthetase of Yersinia pestis.